We begin with the raw amino-acid sequence, 644 residues long: Probable potassium transport system protein Kup (644 aa).

12 helical membrane passes run 10-30 (GGATLPLMAMAALGVVFGDIG), 56-76 (ILSLIFWTLVLVVSVKYAWVI), 106-126 (WWILSIGLLGAALFYGDGVIT), 143-163 (PAWKPLVIPLALGVIIGLFMV), 175-195 (FGPSMLVWFLLLFGSGLTWIV), 212-232 (FFGIHGIGGLVILGAVVLAVT), 252-272 (AWYFLVLPALALNYLGQGALL), 282-302 (PFFMLFPAWATIPMVVISGIA), 343-363 (IYLPLLNWLLMVAVIVVILWF), 371-391 (FAYGTAVTGTMLMTTILVFFV), 403-423 (AGLFCGFFVLLDGVFFGANLL), and 425-445 (FVEGGWFPLAIGLAVFTTMST).

It belongs to the HAK/KUP transporter (TC 2.A.72) family.

The protein resides in the cell inner membrane. The catalysed reaction is K(+)(in) + H(+)(in) = K(+)(out) + H(+)(out). In terms of biological role, transport of potassium into the cell. Likely operates as a K(+):H(+) symporter. The sequence is that of Probable potassium transport system protein Kup from Acidithiobacillus ferrooxidans (strain ATCC 23270 / DSM 14882 / CIP 104768 / NCIMB 8455) (Ferrobacillus ferrooxidans (strain ATCC 23270)).